A 134-amino-acid polypeptide reads, in one-letter code: Small ribosomal subunit protein uS8c (134 aa).

This sequence belongs to the universal ribosomal protein uS8 family. As to quaternary structure, part of the 30S ribosomal subunit.

The protein localises to the plastid. One of the primary rRNA binding proteins, it binds directly to 16S rRNA central domain where it helps coordinate assembly of the platform of the 30S subunit. This chain is Small ribosomal subunit protein uS8c (rps8), found in Cuscuta gronovii (Common dodder).